The sequence spans 100 residues: Putative ESAT-6-like protein Y (100 aa).

Belongs to the WXG100 family.

In Mycobacterium leprae (strain TN), this protein is Putative ESAT-6-like protein Y.